We begin with the raw amino-acid sequence, 452 residues long: Probable ECA polymerase (452 aa).

11 helical membrane passes run 6-26, 37-57, 63-83, 118-138, 155-175, 181-201, 207-227, 228-248, 341-361, 378-398, and 410-430; these read FSGLLVVWLLSTLFIATLTWF, VFFSLLFLLTFFFGFPLTSVL, VGVAPPEILLQALLSAACFYG, VILMGIALVSVAIFFMHNGFL, GVALKRFFYFFIPAMLVVYFL, AWLFFLVSTVAFGLLTYMIVG, IIIAFAIFLFIGIIRGWISLW, MLVAAGVLGIVGMFWLALKRY, LVVMGGALFIPLGAIVVGLII, YKAAILHSFCFGAIFNMIVLA, and VFFLVVFGASLLVAKLLFWLF.

Belongs to the WzyE family. Probably part of a complex composed of WzxE, WzyE and WzzE.

The protein localises to the cell inner membrane. It functions in the pathway bacterial outer membrane biogenesis; enterobacterial common antigen biosynthesis. In terms of biological role, probably involved in the polymerization of enterobacterial common antigen (ECA) trisaccharide repeat units. The protein is Probable ECA polymerase of Salmonella agona (strain SL483).